A 541-amino-acid polypeptide reads, in one-letter code: Chaperonin GroEL 2 (541 aa).

ATP is bound by residues 29-32, 86-90, Gly-413, 476-478, and Asp-492; these read TLGP, DGTTT, and NAA.

The protein belongs to the chaperonin (HSP60) family. As to quaternary structure, forms a cylinder of 14 subunits composed of two heptameric rings stacked back-to-back. Interacts with the co-chaperonin GroES.

Its subcellular location is the secreted. It localises to the capsule. The protein resides in the cell surface. It is found in the cell wall. It catalyses the reaction ATP + H2O + a folded polypeptide = ADP + phosphate + an unfolded polypeptide.. Functionally, together with its co-chaperonin GroES, plays an essential role in assisting protein folding. The GroEL-GroES system forms a nano-cage that allows encapsulation of the non-native substrate proteins and provides a physical environment optimized to promote and accelerate protein folding. This is Chaperonin GroEL 2 from Mycobacterium leprae (strain TN).